A 271-amino-acid polypeptide reads, in one-letter code: Aminoglycoside 3'-phosphotransferase (271 aa).

Catalysis depends on D198, which acts as the Proton acceptor.

Belongs to the aminoglycoside phosphotransferase family.

The catalysed reaction is kanamycin A + ATP = kanamycin 3'-phosphate + ADP + H(+). Functionally, resistance to kanamycin and structurally-related aminoglycosides, including amikacin. This is Aminoglycoside 3'-phosphotransferase (aphA1) from Escherichia coli.